We begin with the raw amino-acid sequence, 206 residues long: Peptidyl-tRNA hydrolase (206 aa).

Tyr-19 is a binding site for tRNA. Residue His-24 is the Proton acceptor of the active site. TRNA-binding residues include Tyr-70, Asn-72, and Asn-118.

Belongs to the PTH family. As to quaternary structure, monomer.

The protein localises to the cytoplasm. It catalyses the reaction an N-acyl-L-alpha-aminoacyl-tRNA + H2O = an N-acyl-L-amino acid + a tRNA + H(+). Hydrolyzes ribosome-free peptidyl-tRNAs (with 1 or more amino acids incorporated), which drop off the ribosome during protein synthesis, or as a result of ribosome stalling. Its function is as follows. Catalyzes the release of premature peptidyl moieties from peptidyl-tRNA molecules trapped in stalled 50S ribosomal subunits, and thus maintains levels of free tRNAs and 50S ribosomes. The polypeptide is Peptidyl-tRNA hydrolase (Prochlorococcus marinus (strain MIT 9303)).